The sequence spans 805 residues: Mitochondrial inner membrane m-AAA protease component AFG3L2 (805 aa).

The N-terminal 39 residues, 1-39, are a transit peptide targeting the mitochondrion; that stretch reads MAHRCLLLWGRGACRPRGMPPMLLPGGRTGSTERLYLRM. Residues 40-67 constitute a propeptide, removed in mature form; sequence LYRYATTQAKTSRNSLLTDVIAAYQRLC. Residues 74–127 are disordered; it reads FEKYFPNGKNGKKTSEPKEVMGEKKEPKPAAAPRPSGGGVGGGGKRGGKKDDSH. Basic and acidic residues predominate over residues 86 to 101; the sequence is KTSEPKEVMGEKKEPK. Positions 109 to 118 are enriched in gly residues; sequence SGGGVGGGGK. Lys-118 is subject to N6-succinyllysine. Transmembrane regions (helical) follow at residues 144 to 164 and 252 to 272; these read FKMY…YFLF and GSFL…LYTI. Positions 311, 312, 353, 354, 355, 356, 357, and 491 each coordinate ATP. A Zn(2+)-binding site is contributed by His-575. The active site involves Glu-576. Zn(2+)-binding residues include His-579 and Asp-650. The tract at residues 760 to 805 is disordered; that stretch reads FVEGTGSLDEDTSLPEGLKDWNREREGSEEPSGEKVTSPVQGAGPA. The span at 776 to 787 shows a compositional bias: basic and acidic residues; sequence GLKDWNREREGS.

It in the N-terminal section; belongs to the AAA ATPase family. In the C-terminal section; belongs to the peptidase M41 family. Homohexamer. Forms heterohexamers with SPG7. The m-AAA protease is either composed of homohexamers of AFG3L2 or heterohexamers of AFG3L2 and SPG7. Interacts with MAIP1. Interacts with DNAJC19. Interacts with PHB2. Requires Zn(2+) as cofactor. In terms of processing, upon import into the mitochondrion, the N-terminal transit peptide is cleaved to generate an intermediate form which undergoes autocatalytic proteolytic processing to generate the proteolytically active mature form.

The protein resides in the mitochondrion inner membrane. It catalyses the reaction ATP + H2O = ADP + phosphate + H(+). Functionally, catalytic component of the m-AAA protease, a protease that plays a key role in proteostasis of inner mitochondrial membrane proteins, and which is essential for axonal and neuron development. AFG3L2 possesses both ATPase and protease activities: the ATPase activity is required to unfold substrates, threading them into the internal proteolytic cavity for hydrolysis into small peptide fragments. The m-AAA protease carries out protein quality control in the inner membrane of the mitochondria by mediating degradation of mistranslated or misfolded polypeptides. The m-AAA protease complex also promotes the processing and maturation of mitochondrial proteins, such as MRPL32/bL32m, PINK1 and SP7. Mediates protein maturation of the mitochondrial ribosomal subunit MRPL32/bL32m by catalyzing the cleavage of the presequence of MRPL32/bL32m prior to assembly into the mitochondrial ribosome. Required for SPG7 maturation into its active mature form after SPG7 cleavage by mitochondrial-processing peptidase (MPP). Required for the maturation of PINK1 into its 52kDa mature form after its cleavage by mitochondrial-processing peptidase (MPP). Acts as a regulator of calcium in neurons by mediating degradation of SMDT1/EMRE before its assembly with the uniporter complex, limiting the availability of SMDT1/EMRE for MCU assembly and promoting efficient assembly of gatekeeper subunits with MCU. Promotes the proteolytic degradation of GHITM upon hyperpolarization of mitochondria: progressive GHITM degradation leads to respiratory complex I degradation and broad reshaping of the mitochondrial proteome by AFG3L2. Also acts as a regulator of mitochondrial glutathione homeostasis by mediating cleavage and degradation of SLC25A39. SLC25A39 cleavage is prevented when SLC25A39 binds iron-sulfur. Involved in the regulation of OMA1-dependent processing of OPA1. May act by mediating processing of OMA1 precursor, participating in OMA1 maturation. The polypeptide is Mitochondrial inner membrane m-AAA protease component AFG3L2 (AFG3L2) (Bos taurus (Bovine)).